Here is a 252-residue protein sequence, read N- to C-terminus: Imidazole glycerol phosphate synthase subunit HisF (252 aa).

Residues D11 and D130 contribute to the active site.

The protein belongs to the HisA/HisF family. Heterodimer of HisH and HisF.

The protein resides in the cytoplasm. The catalysed reaction is 5-[(5-phospho-1-deoxy-D-ribulos-1-ylimino)methylamino]-1-(5-phospho-beta-D-ribosyl)imidazole-4-carboxamide + L-glutamine = D-erythro-1-(imidazol-4-yl)glycerol 3-phosphate + 5-amino-1-(5-phospho-beta-D-ribosyl)imidazole-4-carboxamide + L-glutamate + H(+). Its pathway is amino-acid biosynthesis; L-histidine biosynthesis; L-histidine from 5-phospho-alpha-D-ribose 1-diphosphate: step 5/9. Its function is as follows. IGPS catalyzes the conversion of PRFAR and glutamine to IGP, AICAR and glutamate. The HisF subunit catalyzes the cyclization activity that produces IGP and AICAR from PRFAR using the ammonia provided by the HisH subunit. The polypeptide is Imidazole glycerol phosphate synthase subunit HisF (Azobacteroides pseudotrichonymphae genomovar. CFP2).